The sequence spans 182 residues: MTTASPSQVRQNYHQDSEAAINRQINLELYASYVYLSMSCYFDRDDVALKNFAKYFLHQSHEEREHAEKLMKLQNQRGGRIFLQDIKKPDRDDWESGLNAMRCALHLEKSVNQSLLELHKLATDKNDPHLCDFIETHYLNEQVKSIKELGDHVTNLRKMGAPESGMAEYLFDKHTLGHGDES.

Position 1 is an N-acetylmethionine (Met1). Thr2 carries the post-translational modification N-acetylthreonine; in Ferritin heavy chain, N-terminally processed. Residues 11-160 (QNYHQDSEAA…DHVTNLRKMG (150 aa)) enclose the Ferritin-like diiron domain. Fe cation contacts are provided by Glu28, Glu63, His66, Glu108, and Gln142.

The protein belongs to the ferritin family. Oligomer of 24 subunits. There are two types of subunits: L (light) chain and H (heavy) chain. The major chain can be light or heavy, depending on the species and tissue type. The functional molecule forms a roughly spherical shell with a diameter of 12 nm and contains a central cavity into which the insoluble mineral iron core is deposited. Interacts with NCOA4; NCOA4 promotes targeting of the iron-binding ferritin complex to autolysosomes following starvation or iron depletion.

The protein resides in the cytoplasm. It is found in the lysosome. It localises to the cytoplasmic vesicle. The protein localises to the autophagosome. It carries out the reaction 4 Fe(2+) + O2 + 4 H(+) = 4 Fe(3+) + 2 H2O. Functionally, stores iron in a soluble, non-toxic, readily available form. Important for iron homeostasis. Has ferroxidase activity. Iron is taken up in the ferrous form and deposited as ferric hydroxides after oxidation. Also plays a role in delivery of iron to cells. Mediates iron uptake in capsule cells of the developing kidney. Delivery to lysosomes is mediated by the cargo receptor NCOA4 for autophagic degradation and release of iron. This is Ferritin heavy chain (Fth1) from Rattus norvegicus (Rat).